A 676-amino-acid chain; its full sequence is Envelope glycoprotein (676 aa).

Positions 1–32 (MGVTGILQLPRDRFKRTSFFLWVIILFQRTFS) are cleaved as a signal peptide. The Extracellular portion of the chain corresponds to 33–650 (IPLGVIHNST…NDNWWTGWRQ (618 aa)). An N-linked (GlcNAc...) asparagine; by host glycan is attached at Asn-40. 5 cysteine pairs are disulfide-bonded: Cys-53–Cys-609, Cys-108–Cys-135, Cys-121–Cys-147, Cys-511–Cys-556, and Cys-601–Cys-608. A receptor-binding region spans residues 54–201 (RDKLSSTNQL…DFFSSHPLRE (148 aa)). 11 N-linked (GlcNAc...) asparagine; by host glycosylation sites follow: Asn-204, Asn-228, Asn-238, Asn-257, Asn-268, Asn-296, Asn-317, Asn-333, Asn-346, Asn-386, and Asn-413. Positions 305–485 (ELSFTAVSNR…SGKLGLITNT (181 aa)) are mucin-like region. Over residues 314–335 (RAKNISGQSPARTSSDPGTNTT) the composition is skewed to polar residues. Residues 314–337 (RAKNISGQSPARTSSDPGTNTTTE) form a disordered region. The interval 370–478 (TISTSPQPPT…TGEESASSGK (109 aa)) is disordered. Over residues 414–427 (DSTASDTPPATTAA) the composition is skewed to low complexity. N-linked (GlcNAc...) asparagine; by host glycans are attached at residues Asn-436, Asn-454, and Asn-462. Over residues 447–464 (ATTTSPQNHSETAGNNNT) the composition is skewed to polar residues. The interval 524-539 (GAAIGLAWIPYFGPAA) is fusion peptide. A coiled-coil region spans residues 554–595 (LICGLRQLANETTQALQLFLRATTELRTFSILNRKAIDFLLQ). A glycan (N-linked (GlcNAc...) asparagine; by host) is linked at Asn-563. Positions 615–634 (WTKNITDKIDQIIHDFVDKT) form a coiled coil. An N-linked (GlcNAc...) asparagine; by host glycan is attached at Asn-618. Residues 651–671 (WIPAGIGVTGVIIAVIALFCI) form a helical membrane-spanning segment. 2 S-palmitoyl cysteine; by host lipidation sites follow: Cys-670 and Cys-672. Over 672–676 (CKFVF) the chain is Cytoplasmic.

The protein belongs to the filoviruses glycoprotein family. In terms of assembly, homotrimer; each monomer consists of a GP1 and a GP2 subunit linked by disulfide bonds. The resulting peplomers (GP1,2) protrude from the virus surface as spikes. Interacts with host integrin alpha-V/ITGAV. Interacts with host CLEC10A. Binds also to host CD209 and CLEC4M/DC-SIGN(R). Interacts with host FOLR1. Interacts with BST2; this interaction inhibits the antiviral effect of BST2 and this allows viral release from infected cells. Interacts with host FCN1; this interaction enhances viral entry. Interacts with host TLR4; this interaction induces cell death in T-lymphocytes or proinflammatory cytokines and SOCS1 production in monocytes. Interacts with host entry receptor NPC1. As to quaternary structure, GP1 and GP2delta are part of GP1,2delta soluble complexes released by ectodomain shedding. In terms of processing, the signal peptide region modulates GP's high mannose glycosylation, thereby determining the efficiency of the interactions with DC-SIGN(R). N-glycosylated. Post-translationally, O-glycosylated in the mucin-like region. In terms of processing, palmitoylation of GP2 is not required for its function. Specific enzymatic cleavages in vivo yield mature proteins. The precursor is processed into GP1 and GP2 by host cell furin in the trans Golgi, and maybe by other host proteases, to yield the mature GP1 and GP2 proteins. The cleavage site corresponds to the furin optimal cleavage sequence [KR]-X-[KR]-R. This cleavage does not seem to be required for function. After the internalization of the virus into cell endosomes, GP1 C-terminus is removed by the endosomal proteases cathepsin B, cathepsin L, or both, leaving a 19-kDa N-terminal fragment which is further digested by cathepsin B. Proteolytic processing of GP1,2 by host ADAM17 can remove the transmembrane anchor of GP2 and leads to shedding of complexes consisting in GP1 and truncated GP2 (GP1,2delta).

It is found in the virion membrane. Its subcellular location is the host cell membrane. The protein localises to the secreted. Functionally, trimeric GP1,2 complexes form the virion surface spikes and mediate the viral entry processes, with GP1 acting as the receptor-binding subunit and GP2 as the membrane fusion subunit. At later times of infection, down-regulates the expression of various host cell surface molecules that are essential for immune surveillance and cell adhesion. Down-modulates several integrins including ITGA1, ITGA2, ITGA3, ITGA4, ITGA5, ITGA6, ITGAV and ITGB1. This decrease in cell adhesion molecules may lead to cell detachment, contributing to the disruption of blood vessel integrity and hemorrhages developed during infection (cytotoxicity). Interacts with host TLR4 and thereby stimulates the differentiation and activation of monocytes leading to bystander death of T-lymphocytes. Down-regulates as well the function of host natural killer cells. Counteracts the antiviral effect of host BST2/tetherin that restricts release of progeny virions from infected cells. However, cooperates with VP40 and host BST2 to activate canonical NF-kappa-B pathway in a manner dependent on neddylation. In terms of biological role, functions as a decoy for anti-GP1,2 antibodies thereby contributing to viral immune evasion. Interacts and activates host macrophages and dendritic cells inducing up-regulation of cytokine transcription. This effect is mediated throught activation of host TLR4. Its function is as follows. Responsible for binding to the receptor(s) on target cells. Interacts with CD209/DC-SIGN and CLEC4M/DC-SIGNR which act as cofactors for virus entry into dendritic cells (DCs) and endothelial cells. Binding to the macrophage specific lectin CLEC10A also seems to enhance virus infectivity. Interaction with FOLR1/folate receptor alpha may be a cofactor for virus entry in some cell types, although results are contradictory. Members of the Tyro3 receptor tyrosine kinase family also seem to be cell entry factors in filovirus infection. Once attached, the virions are internalized through clathrin-dependent endocytosis and/or macropinocytosis. After internalization of the virus into the endosomes of the host cell, proteolysis of GP1 by two cysteine proteases, CTSB/cathepsin B and CTSL/cathepsin L removes the glycan cap and allows GP1 binding to the host entry receptor NPC1. NPC1-binding, Ca(2+) and acidic pH induce a conformational change of GP2, which unmasks its fusion peptide and permit membranes fusion. Acts as a class I viral fusion protein. Under the current model, the protein has at least 3 conformational states: pre-fusion native state, pre-hairpin intermediate state, and post-fusion hairpin state. During viral and target cell membrane fusion, the coiled coil regions (heptad repeats) assume a trimer-of-hairpins structure, positioning the fusion peptide in close proximity to the C-terminal region of the ectodomain. The formation of this structure appears to drive apposition and subsequent fusion of viral and target cell membranes. Responsible for penetration of the virus into the cell cytoplasm by mediating the fusion of the membrane of the endocytosed virus particle with the endosomal membrane. Low pH in endosomes induces an irreversible conformational change in GP2, releasing the fusion hydrophobic peptide. In Zaire ebolavirus (strain Kikwit-95) (ZEBOV), this protein is Envelope glycoprotein (GP).